Reading from the N-terminus, the 218-residue chain is Adenylate kinase (218 aa).

G10–T15 is an ATP binding site. The tract at residues S30–V59 is NMP. AMP is bound by residues T31, R36, G57–V59, G85–R88, and Q92. Residues G122–D159 form an LID region. Residues R123 and V132–Y133 each bind ATP. AMP contacts are provided by R156 and R167. G203 lines the ATP pocket.

The protein belongs to the adenylate kinase family. In terms of assembly, monomer.

It localises to the cytoplasm. It carries out the reaction AMP + ATP = 2 ADP. Its pathway is purine metabolism; AMP biosynthesis via salvage pathway; AMP from ADP: step 1/1. Functionally, catalyzes the reversible transfer of the terminal phosphate group between ATP and AMP. Plays an important role in cellular energy homeostasis and in adenine nucleotide metabolism. This is Adenylate kinase from Hahella chejuensis (strain KCTC 2396).